Reading from the N-terminus, the 1024-residue chain is Protein translocase subunit SecA (1024 aa).

Residues Gln143, 161-165 (GEGKT), and Asp661 each bind ATP. Positions 970-1024 (HEEAGSVYNAQPDGEPESQASKQQPVVADHSKPGRNDLCPCGSGKKYKNCHGREA) are disordered. Residues Cys1008, Cys1010, Cys1019, and His1020 each coordinate Zn(2+). Positions 1014–1024 (KKYKNCHGREA) are enriched in basic residues.

Belongs to the SecA family. In terms of assembly, monomer and homodimer. Part of the essential Sec protein translocation apparatus which comprises SecA, SecYEG and auxiliary proteins SecDF. Other proteins may also be involved. Zn(2+) serves as cofactor.

The protein resides in the cell inner membrane. Its subcellular location is the cytoplasm. The enzyme catalyses ATP + H2O + cellular proteinSide 1 = ADP + phosphate + cellular proteinSide 2.. Functionally, part of the Sec protein translocase complex. Interacts with the SecYEG preprotein conducting channel. Has a central role in coupling the hydrolysis of ATP to the transfer of proteins into and across the cell membrane, serving as an ATP-driven molecular motor driving the stepwise translocation of polypeptide chains across the membrane. The chain is Protein translocase subunit SecA from Chlorobium luteolum (strain DSM 273 / BCRC 81028 / 2530) (Pelodictyon luteolum).